The chain runs to 341 residues: S-adenosylmethionine:tRNA ribosyltransferase-isomerase (341 aa).

The protein belongs to the QueA family. In terms of assembly, monomer.

It localises to the cytoplasm. The catalysed reaction is 7-aminomethyl-7-carbaguanosine(34) in tRNA + S-adenosyl-L-methionine = epoxyqueuosine(34) in tRNA + adenine + L-methionine + 2 H(+). Its pathway is tRNA modification; tRNA-queuosine biosynthesis. Functionally, transfers and isomerizes the ribose moiety from AdoMet to the 7-aminomethyl group of 7-deazaguanine (preQ1-tRNA) to give epoxyqueuosine (oQ-tRNA). The polypeptide is S-adenosylmethionine:tRNA ribosyltransferase-isomerase (Halothermothrix orenii (strain H 168 / OCM 544 / DSM 9562)).